Consider the following 396-residue polypeptide: Putative carbamoyltransferase YgeW (396 aa).

Residues serine 71–threonine 74, glutamine 98, histidine 165–glutamine 168, and cysteine 330–leucine 331 contribute to the carbamoyl phosphate site.

This sequence belongs to the aspartate/ornithine carbamoyltransferase superfamily. As to quaternary structure, homotrimer.

The sequence is that of Putative carbamoyltransferase YgeW (ygeW) from Escherichia coli O6:H1 (strain CFT073 / ATCC 700928 / UPEC).